Consider the following 63-residue polypeptide: Large ribosomal subunit protein uL29 (63 aa).

Belongs to the universal ribosomal protein uL29 family.

The chain is Large ribosomal subunit protein uL29 from Pectobacterium atrosepticum (strain SCRI 1043 / ATCC BAA-672) (Erwinia carotovora subsp. atroseptica).